Here is a 352-residue protein sequence, read N- to C-terminus: C-C chemokine receptor type 5 (352 aa).

At 1 to 30 (MDYQVSSPTYDIDYYTSEPCQKINVKQIAA) the chain is on the extracellular side. Residue Y3 is modified to Sulfotyrosine. S6 and S7 each carry an O-linked (GalNAc...) serine glycan. Residues Y10, Y14, and Y15 each carry the sulfotyrosine modification. 2 cysteine pairs are disulfide-bonded: C20–C269 and C101–C178. Residues 31 to 58 (RLLPPLYSLVFIFGFVGNILVVLILINC) form a helical membrane-spanning segment. At 59 to 68 (KRLKSMTDIY) the chain is on the cytoplasmic side. The helical transmembrane segment at 69 to 89 (LLNLAISDLLFLLTVPFWAHY) threads the bilayer. At 90-102 (AAAQWDFGNTMCQ) the chain is on the extracellular side. The chain crosses the membrane as a helical span at residues 103-124 (LLTGLYFIGFFSGIFFIILLTI). At 125–141 (DRYLAIVHAVFALKART) the chain is on the cytoplasmic side. The chain crosses the membrane as a helical span at residues 142–166 (VTFGVVTSVITWVVAVFASLPGIIF). Over 167 to 198 (TRSQREGLHYTCSSHFPYSQYQFWKNFQTLKI) the chain is Extracellular. The chain crosses the membrane as a helical span at residues 199 to 218 (VILGLVLPLLVMVICYSGIL). Over 219-235 (KTLLRCRNEKKRHRAVR) the chain is Cytoplasmic. The chain crosses the membrane as a helical span at residues 236-260 (LIFTIMIVYFLFWAPYNIVLLLNTF). Residues 261-277 (QEFFGLNNCSSSNRLDQ) are Extracellular-facing. Residues 278 to 301 (AMQVTETLGMTHCCINPIIYAFVG) form a helical membrane-spanning segment. Residues 302 to 352 (EKFRNYLLVFFQKHIAKRFCKCCSIFQQEASERASSVYTRSTGEQEISVGL) are Cytoplasmic-facing. Residues C321, C323, and C324 are each lipidated (S-palmitoyl cysteine). 4 positions are modified to phosphoserine; by BARK1: S336, S337, S342, and S349.

It belongs to the G-protein coupled receptor 1 family. As to quaternary structure, interacts with PRAF2. Efficient ligand binding to CCL3/MIP-1alpha and CCL4/MIP-1beta requires sulfation, O-glycosylation and sialic acid modifications. Glycosylation on Ser-6 is required for efficient binding of CCL4. Interacts with GRK2. Interacts with ARRB1 and ARRB2. Interacts with CNIH4. Interacts with S100A4; this interaction stimulates T-lymphocyte chemotaxis. Sulfated on at least 2 of the N-terminal tyrosines. Sulfation is required for efficient binding of the chemokines, CCL3 and CCL4. Post-translationally, palmitoylation in the C-terminal is important for cell surface expression. In terms of processing, phosphorylation on serine residues in the C-terminal is stimulated by binding CC chemokines especially by APO-RANTES. O-glycosylated, but not N-glycosylated. Ser-6 appears to be the major site even if Ser-7 may be also O-glycosylated. Also sialylated glycans present which contribute to chemokine binding. Thr-16 and Ser-17 may also be glycosylated and, if so, with small moieties such as a T-antigen.

The protein localises to the cell membrane. Receptor for a number of inflammatory CC-chemokines including CCL3/MIP-1-alpha, CCL4/MIP-1-beta and RANTES and subsequently transduces a signal by increasing the intracellular calcium ion level. May play a role in the control of granulocytic lineage proliferation or differentiation. Participates in T-lymphocyte migration to the infection site by acting as a chemotactic receptor. This Cercocebus galeritus (Tana river mangabey) protein is C-C chemokine receptor type 5 (CCR5).